Consider the following 522-residue polypeptide: Sugar transport protein MST2 (522 aa).

Over 1 to 24 the chain is Cytoplasmic; that stretch reads MAAATAADVAEDTASVYSGKLTLY. Residues 25-45 form a helical membrane-spanning segment; that stretch reads VFLTCGVAATGGLIIGYDIGI. At 46 to 82 the chain is on the extracellular side; it reads SGGVTSMDTFLGKFFPSVLHQEQTAQGTSQYCKFNSQ. The helical transmembrane segment at 83-103 threads the bilayer; that stretch reads PLTAFTSSLYLAALVASFFVA. Residues 104–111 lie on the Cytoplasmic side of the membrane; sequence SFTRALGR. Residues 112–132 form a helical membrane-spanning segment; sequence KWSMFGGGVSFLAGATLNGAA. At 133 to 134 the chain is on the extracellular side; the sequence is RN. A helical transmembrane segment spans residues 135-155; the sequence is VAMLIVGRILLGIGVAFCGLS. At 156–169 the chain is on the cytoplasmic side; the sequence is TPIYLSEMAPPRLR. A helical membrane pass occupies residues 170–190; sequence GMLNIGLQLMITVGIFSANLV. Residues 191–204 lie on the Extracellular side of the membrane; the sequence is NYGAAKIRGGWGWR. Residues 205–225 traverse the membrane as a helical segment; it reads VSLGLAAAPACVIAVGSLFLP. Over 226 to 291 the chain is Cytoplasmic; that stretch reads DSPSSLINRG…DVLQRRYRPQ (66 aa). Residues 292–312 traverse the membrane as a helical segment; that stretch reads LAMAVLIPFFQQLTGINVIMF. Topologically, residues 313 to 329 are extracellular; that stretch reads YAPVLFKTIGLGGDASL. The helical transmembrane segment at 330-350 threads the bilayer; sequence MSAVITGLVNIVATFVSIATV. Topologically, residues 351 to 361 are cytoplasmic; the sequence is DSLGRRKLLFQ. The helical transmembrane segment at 362–382 threads the bilayer; the sequence is GGCQMLVSQVIIGTLIGVVFG. The Extracellular segment spans residues 383–391; that stretch reads TSGDGNISR. Residues 392 to 412 traverse the membrane as a helical segment; it reads ALAVCIVVFICVYVAGFAWSW. Residues 413 to 434 lie on the Cytoplasmic side of the membrane; the sequence is GPLGVLLPSEIFPLEVRPAGQS. A helical transmembrane segment spans residues 435 to 455; that stretch reads ISVAVNMLCTFAVAEAFLPML. Residues 456–459 are Extracellular-facing; it reads CHMR. Residues 460-480 form a helical membrane-spanning segment; sequence FGLFYFFSGWVLVMTLFVSAF. The Cytoplasmic portion of the chain corresponds to 481–522; that stretch reads LPETKGVPIEKMTVVWRTHWFWGRFYCNQDADAHVQVANSKV.

The protein belongs to the major facilitator superfamily. Sugar transporter (TC 2.A.1.1) family.

Its subcellular location is the membrane. Mediates active uptake of hexoses by sugar:proton symport. Can transport glucose. The chain is Sugar transport protein MST2 from Oryza sativa subsp. japonica (Rice).